The sequence spans 313 residues: tRNA dimethylallyltransferase (313 aa).

8–15 (GPTGTGKS) provides a ligand contact to ATP. Substrate is bound at residue 10-15 (TGTGKS).

It belongs to the IPP transferase family. As to quaternary structure, monomer. Mg(2+) serves as cofactor.

The catalysed reaction is adenosine(37) in tRNA + dimethylallyl diphosphate = N(6)-dimethylallyladenosine(37) in tRNA + diphosphate. Functionally, catalyzes the transfer of a dimethylallyl group onto the adenine at position 37 in tRNAs that read codons beginning with uridine, leading to the formation of N6-(dimethylallyl)adenosine (i(6)A). The polypeptide is tRNA dimethylallyltransferase (Mycolicibacterium gilvum (strain PYR-GCK) (Mycobacterium gilvum (strain PYR-GCK))).